We begin with the raw amino-acid sequence, 285 residues long: Bifunctional protein FolD (285 aa).

NADP(+) contacts are provided by residues 165 to 167, serine 190, and isoleucine 231; that span reads GRS.

This sequence belongs to the tetrahydrofolate dehydrogenase/cyclohydrolase family. As to quaternary structure, homodimer.

It carries out the reaction (6R)-5,10-methylene-5,6,7,8-tetrahydrofolate + NADP(+) = (6R)-5,10-methenyltetrahydrofolate + NADPH. The catalysed reaction is (6R)-5,10-methenyltetrahydrofolate + H2O = (6R)-10-formyltetrahydrofolate + H(+). It functions in the pathway one-carbon metabolism; tetrahydrofolate interconversion. Functionally, catalyzes the oxidation of 5,10-methylenetetrahydrofolate to 5,10-methenyltetrahydrofolate and then the hydrolysis of 5,10-methenyltetrahydrofolate to 10-formyltetrahydrofolate. In Verminephrobacter eiseniae (strain EF01-2), this protein is Bifunctional protein FolD.